The sequence spans 240 residues: Methylthioribulose-1-phosphate dehydratase (240 aa).

Residue Cys100 coordinates substrate. Residues His117 and His119 each coordinate Zn(2+). The active-site Proton donor/acceptor is the Glu146. Position 202 (His202) interacts with Zn(2+).

This sequence belongs to the aldolase class II family. MtnB subfamily. It depends on Zn(2+) as a cofactor.

Its subcellular location is the cytoplasm. The enzyme catalyses 5-(methylsulfanyl)-D-ribulose 1-phosphate = 5-methylsulfanyl-2,3-dioxopentyl phosphate + H2O. It functions in the pathway amino-acid biosynthesis; L-methionine biosynthesis via salvage pathway; L-methionine from S-methyl-5-thio-alpha-D-ribose 1-phosphate: step 2/6. Functionally, catalyzes the dehydration of methylthioribulose-1-phosphate (MTRu-1-P) into 2,3-diketo-5-methylthiopentyl-1-phosphate (DK-MTP-1-P). In Emericella nidulans (strain FGSC A4 / ATCC 38163 / CBS 112.46 / NRRL 194 / M139) (Aspergillus nidulans), this protein is Methylthioribulose-1-phosphate dehydratase.